Here is a 209-residue protein sequence, read N- to C-terminus: Thymidylate kinase (209 aa).

An ATP-binding site is contributed by 10–17; sequence GLDGAGKS.

This sequence belongs to the thymidylate kinase family.

It carries out the reaction dTMP + ATP = dTDP + ADP. Functionally, phosphorylation of dTMP to form dTDP in both de novo and salvage pathways of dTTP synthesis. The chain is Thymidylate kinase from Francisella tularensis subsp. novicida (strain U112).